The following is a 209-amino-acid chain: B3 domain-containing protein At2g31420 (209 aa).

Residues 101 to 198 (LSKLEKSDFL…KLCFALSSPT (98 aa)) constitute a DNA-binding region (TF-B3).

The protein resides in the nucleus. The chain is B3 domain-containing protein At2g31420 from Arabidopsis thaliana (Mouse-ear cress).